The following is a 301-amino-acid chain: CPX chromosomal region candidate gene 1 protein (301 aa).

Residues 1–77 are disordered; the sequence is MSYPTKEGSD…ENSELETEIQ (77 aa). Over residues 44–60 the composition is skewed to polar residues; that stretch reads VETNPINREPGTATSQE.

As to expression, expressed in a variety of fetal tissues.

In Homo sapiens (Human), this protein is CPX chromosomal region candidate gene 1 protein (CPXCR1).